The chain runs to 685 residues: Mesothelin-like protein (685 aa).

The signal sequence occupies residues 1-32 (MSRTLRPSAMGSRVGALASPGLALLLSLTAHC). Residues 33 to 627 (SGPQAKGLPK…GVSHTSGSPP (595 aa)) lie on the Extracellular side of the membrane. Asn315 and Asn400 each carry an N-linked (GlcNAc...) asparagine glycan. Positions 603–624 (PPSSLIHSLDPPGNDGVSHTSG) are disordered. Residues 628-648 (VHLGYLSLAVALPSSLLWLLL) form a helical membrane-spanning segment. Residues 649–685 (CQLPSGQMATAHRTLGPMALAQGSWTPEHQIPEKRSC) are Cytoplasmic-facing.

Belongs to the mesothelin family.

Its subcellular location is the membrane. Functionally, may play a role in cellular adhesion. This chain is Mesothelin-like protein (Mslnl), found in Mus musculus (Mouse).